Reading from the N-terminus, the 334-residue chain is Probable prephenate dehydratase (334 aa).

Positions 7–224 (RVLFLGPKGT…NTTRFLVLKR (218 aa)) constitute a Prephenate dehydratase domain. The 79-residue stretch at 244 to 322 (LTFTTRQDDP…SDKSKQWCLW (79 aa)) folds into the ACT domain.

It localises to the cytoplasm. It carries out the reaction prephenate + H(+) = 3-phenylpyruvate + CO2 + H2O. It participates in amino-acid biosynthesis; L-phenylalanine biosynthesis; phenylpyruvate from prephenate: step 1/1. Catayzes the decarboxylation/dehydration of prephenate to phenylpyruvate. This is Probable prephenate dehydratase (PHA2) from Saccharomyces cerevisiae (strain ATCC 204508 / S288c) (Baker's yeast).